A 369-amino-acid chain; its full sequence is Cobalt-precorrin-5B C(1)-methyltransferase (369 aa).

Belongs to the CbiD family.

It catalyses the reaction Co-precorrin-5B + S-adenosyl-L-methionine = Co-precorrin-6A + S-adenosyl-L-homocysteine. The protein operates within cofactor biosynthesis; adenosylcobalamin biosynthesis; cob(II)yrinate a,c-diamide from sirohydrochlorin (anaerobic route): step 6/10. Its function is as follows. Catalyzes the methylation of C-1 in cobalt-precorrin-5B to form cobalt-precorrin-6A. This is Cobalt-precorrin-5B C(1)-methyltransferase from Brucella melitensis biotype 2 (strain ATCC 23457).